The sequence spans 463 residues: Exodeoxyribonuclease 7 large subunit (463 aa).

This sequence belongs to the XseA family. As to quaternary structure, heterooligomer composed of large and small subunits.

Its subcellular location is the cytoplasm. The enzyme catalyses Exonucleolytic cleavage in either 5'- to 3'- or 3'- to 5'-direction to yield nucleoside 5'-phosphates.. Bidirectionally degrades single-stranded DNA into large acid-insoluble oligonucleotides, which are then degraded further into small acid-soluble oligonucleotides. The sequence is that of Exodeoxyribonuclease 7 large subunit from Klebsiella pneumoniae subsp. pneumoniae (strain ATCC 700721 / MGH 78578).